A 445-amino-acid polypeptide reads, in one-letter code: Tripartite motif-containing protein 43B (445 aa).

The RING-type zinc finger occupies 16 to 57; that stretch reads CSICQGIFMNPVYLKCGHKFCEACLLLFQEDIKFPAYCPMCM. Residues 88–129 form a B box-type zinc finger; it reads SEEHKCVTHKAKKMIFCDKSKILLCHLCSDSQEHSGHTHCSI. Residues C93, H96, C115, and H121 each contribute to the Zn(2+) site. The B30.2/SPRY domain occupies 271–445; sequence RLRAHSIPGL…VRPFFSAVYT (175 aa).

The protein belongs to the TRIM/RBCC family.

This is Tripartite motif-containing protein 43B from Mus musculus (Mouse).